Consider the following 340-residue polypeptide: Anthranilate phosphoribosyltransferase (340 aa).

5-phospho-alpha-D-ribose 1-diphosphate-binding positions include Gly79, 82 to 83 (GD), Thr87, 89 to 92 (NIST), 107 to 115 (KHGNRAVTG), and Ser119. Residue Gly79 coordinates anthranilate. Ser91 is a Mg(2+) binding site. Asn110 lines the anthranilate pocket. Arg165 contributes to the anthranilate binding site. Mg(2+)-binding residues include Asp224 and Glu225.

This sequence belongs to the anthranilate phosphoribosyltransferase family. Homodimer. The cofactor is Mg(2+).

It catalyses the reaction N-(5-phospho-beta-D-ribosyl)anthranilate + diphosphate = 5-phospho-alpha-D-ribose 1-diphosphate + anthranilate. The protein operates within amino-acid biosynthesis; L-tryptophan biosynthesis; L-tryptophan from chorismate: step 2/5. In terms of biological role, catalyzes the transfer of the phosphoribosyl group of 5-phosphorylribose-1-pyrophosphate (PRPP) to anthranilate to yield N-(5'-phosphoribosyl)-anthranilate (PRA). The protein is Anthranilate phosphoribosyltransferase of Syntrophomonas wolfei subsp. wolfei (strain DSM 2245B / Goettingen).